The primary structure comprises 339 residues: Methionyl-tRNA formyltransferase (339 aa).

110 to 113 (SLLP) lines the (6S)-5,6,7,8-tetrahydrofolate pocket.

It belongs to the Fmt family.

The catalysed reaction is L-methionyl-tRNA(fMet) + (6R)-10-formyltetrahydrofolate = N-formyl-L-methionyl-tRNA(fMet) + (6S)-5,6,7,8-tetrahydrofolate + H(+). In terms of biological role, attaches a formyl group to the free amino group of methionyl-tRNA(fMet). The formyl group appears to play a dual role in the initiator identity of N-formylmethionyl-tRNA by promoting its recognition by IF2 and preventing the misappropriation of this tRNA by the elongation apparatus. The chain is Methionyl-tRNA formyltransferase from Prochlorococcus marinus (strain SARG / CCMP1375 / SS120).